The sequence spans 478 residues: Probable serine carboxypeptidase CPVL (478 aa).

An N-terminal signal peptide occupies residues 1–22 (MVRAQWKVIILLILLMVIPSDG). 2 N-linked (GlcNAc...) asparagine glycosylation sites follow: Asn-83 and Asn-134. Residue Ser-206 is part of the active site. N-linked (GlcNAc...) asparagine glycans are attached at residues Asn-309 and Asn-350. Catalysis depends on residues Asp-390 and His-450.

This sequence belongs to the peptidase S10 family.

May be involved in the digestion of phagocytosed particles in the lysosome, participation in an inflammatory protease cascade, and trimming of peptides for antigen presentation. The protein is Probable serine carboxypeptidase CPVL (CPVL) of Rattus norvegicus (Rat).